We begin with the raw amino-acid sequence, 269 residues long: Putative pyruvate, phosphate dikinase regulatory protein (269 aa).

151-158 (GVSRSSKT) contacts ADP.

Belongs to the pyruvate, phosphate/water dikinase regulatory protein family. PDRP subfamily.

It catalyses the reaction N(tele)-phospho-L-histidyl/L-threonyl-[pyruvate, phosphate dikinase] + ADP = N(tele)-phospho-L-histidyl/O-phospho-L-threonyl-[pyruvate, phosphate dikinase] + AMP + H(+). The enzyme catalyses N(tele)-phospho-L-histidyl/O-phospho-L-threonyl-[pyruvate, phosphate dikinase] + phosphate + H(+) = N(tele)-phospho-L-histidyl/L-threonyl-[pyruvate, phosphate dikinase] + diphosphate. Bifunctional serine/threonine kinase and phosphorylase involved in the regulation of the pyruvate, phosphate dikinase (PPDK) by catalyzing its phosphorylation/dephosphorylation. The protein is Putative pyruvate, phosphate dikinase regulatory protein of Geobacter sulfurreducens (strain ATCC 51573 / DSM 12127 / PCA).